The following is a 917-amino-acid chain: Smoothelin (917 aa).

An N-acetylalanine modification is found at Ala2. The stretch at 24-89 forms a coiled coil; that stretch reads LAERRRIRSA…ARLAGQLESM (66 aa). Residues 157 to 456 are disordered; the sequence is EVPEREEQEQ…AVGTAEPGGS (300 aa). Polar residues predominate over residues 177-188; it reads PEGTSQDVTTVT. Composition is skewed to low complexity over residues 193–210 and 220–232; these read APPGSTSSSPASPSSSPT and PAEAQCLTAEVPG. The span at 233-243 shows a compositional bias: pro residues; sequence SPEPPPSPPKT. The segment covering 244 to 258 has biased composition (low complexity); it reads TSPEPQESPTLPSTE. A compositionally biased stretch (polar residues) spans 298–326; sequence RSLSVLSPRQPAQNRESTPLASGPSSFQR. Ser299, Ser301, and Ser304 each carry phosphoserine. A compositionally biased stretch (basic and acidic residues) spans 329 to 338; sequence SVRDRVHKFT. Ser341 carries the post-translational modification Phosphoserine. Thr351 bears the Phosphothreonine mark. At Ser357 the chain carries Phosphoserine. Phosphothreonine is present on residues Thr360 and Thr373. The segment covering 363–392 has biased composition (low complexity); that stretch reads RLLGPSLTSTTPASSSSGSSSRGPSDTSSR. Residues Ser503, Ser514, Ser523, and Ser576 each carry the phosphoserine modification. Disordered regions lie at residues 560-580 and 617-767; these read ANGAEQTRVNKAPEGRSPLSA and QRKR…RKAM. Positions 603–630 form a coiled coil; it reads EERKLIRAALRELRQRKRDQRDKERERR. Over residues 617–640 the composition is skewed to basic and acidic residues; sequence QRKRDQRDKERERRLQEARGRPGE. Over residues 676–689 the composition is skewed to polar residues; sequence NDGTRTARTTTVES. Residues 701–720 are compositionally biased toward low complexity; it reads STMMQTKTFSSSSSSKKMGS. Ser729 bears the Phosphoserine mark. The segment covering 738–750 has biased composition (basic and acidic residues); that stretch reads LEKRQAEKKKELM. At Ser792 the chain carries Phosphoserine. Positions 799–906 constitute a Calponin-homology (CH) domain; that stretch reads NSIKQMLLDW…YVQSLYNHLR (108 aa).

This sequence belongs to the smoothelin family. Smooth muscle; contractile or vascular (for the long form).

Its subcellular location is the cytoplasm. It is found in the cytoskeleton. Its function is as follows. Structural protein of the cytoskeleton. The protein is Smoothelin (SMTN) of Homo sapiens (Human).